A 451-amino-acid polypeptide reads, in one-letter code: UBP1-associated protein 2B (451 aa).

The interval 1–86 (MTKKRKLESE…GNEDDDEEEP (86 aa)) is disordered. 2 stretches are compositionally biased toward basic and acidic residues: residues 25–38 (CEKE…VDNQ) and 49–63 (DTLK…KGED). The span at 67-77 (AETSSGSGNQG) shows a compositional bias: polar residues. RRM domains are found at residues 128–236 (RKIF…NVSA) and 227–314 (RKIY…QHQH). Disordered stretches follow at residues 302-335 (ANDG…GYGA) and 423-451 (GGYQ…YMGR). Residues 431 to 451 (GQGGAGRGQHGAGYGGPYMGR) show a composition bias toward gly residues.

In terms of tissue distribution, expressed in shoot meristem and flowers.

It localises to the nucleus. Functionally, heterogeneous nuclear ribonucleoprotein (hnRNP)-like protein that acts as a component of a complex regulating the turnover of mRNAs in the nucleus. Binds with high affinity to RNA molecules that contain U-rich sequences in 3'-UTRs. May function in complex with UBP1 and contribute to the stabilization of mRNAs in the nucleus. The chain is UBP1-associated protein 2B (UBA2B) from Arabidopsis thaliana (Mouse-ear cress).